We begin with the raw amino-acid sequence, 182 residues long: Glycerol-3-phosphate acyltransferase 1 (182 aa).

5 helical membrane-spanning segments follow: residues 5-25 (MQFLYLVASYLFGNILTAYIV), 54-74 (GYFVATFLGDAIKGAIVVSIA), 81-101 (STFLMLTLLAVIMGHIYPILF), 117-137 (IAFDYLIALTLVTVFIIFYLI), and 157-177 (ILYSYSIVTTILSVLIIVLIL).

This sequence belongs to the PlsY family. In terms of assembly, probably interacts with PlsX.

It is found in the cell membrane. It catalyses the reaction an acyl phosphate + sn-glycerol 3-phosphate = a 1-acyl-sn-glycero-3-phosphate + phosphate. The protein operates within lipid metabolism; phospholipid metabolism. Functionally, catalyzes the transfer of an acyl group from acyl-phosphate (acyl-PO(4)) to glycerol-3-phosphate (G3P) to form lysophosphatidic acid (LPA). This enzyme utilizes acyl-phosphate as fatty acyl donor, but not acyl-CoA or acyl-ACP. This is Glycerol-3-phosphate acyltransferase 1 from Bacillus thuringiensis subsp. konkukian (strain 97-27).